A 117-amino-acid chain; its full sequence is Basic phospholipase A2 pseudexin B chain (117 aa).

7 disulfide bridges follow: C11/C71, C27/C117, C29/C45, C44/C98, C51/C91, C60/C84, and C78/C89. Ca(2+) contacts are provided by Y28, G30, and G32. Residue H48 is part of the active site. Position 49 (D49) interacts with Ca(2+). D92 is a catalytic residue.

This sequence belongs to the phospholipase A2 family. Group I subfamily. D49 sub-subfamily. Ca(2+) serves as cofactor. Expressed by the venom gland.

Its subcellular location is the secreted. It carries out the reaction a 1,2-diacyl-sn-glycero-3-phosphocholine + H2O = a 1-acyl-sn-glycero-3-phosphocholine + a fatty acid + H(+). Functionally, PLA2 catalyzes the calcium-dependent hydrolysis of the 2-acyl groups in 3-sn-phosphoglycerides. The protein is Basic phospholipase A2 pseudexin B chain of Pseudechis porphyriacus (Red-bellied black snake).